The primary structure comprises 137 residues: Small ribosomal subunit protein uS11A (137 aa).

Position 2 is an N-acetylserine (Ser2). The segment at 117–137 is disordered; sequence DVTPVPSDSTRKKGGRRGRRL. The segment covering 128 to 137 has biased composition (basic residues); sequence KKGGRRGRRL.

The protein belongs to the universal ribosomal protein uS11 family. Component of the small ribosomal subunit (SSU). Mature yeast ribosomes consist of a small (40S) and a large (60S) subunit. The 40S small subunit contains 1 molecule of ribosomal RNA (18S rRNA) and 33 different proteins (encoded by 57 genes). The large 60S subunit contains 3 rRNA molecules (25S, 5.8S and 5S rRNA) and 46 different proteins (encoded by 81 genes). uS11 interacts with eS1 forming part of the mRNA exit tunnel. uS11 interacts with snoRNA U3. uS11 interacts with MPP10. Component of the ribosomal small subunit (SSU) processome composed of at least 40 protein subunits and snoRNA U3. Post-translationally, N-terminally acetylated by acetyltransferase NatA.

It localises to the cytoplasm. Its subcellular location is the nucleus. The protein resides in the nucleolus. Its function is as follows. Component of the ribosome, a large ribonucleoprotein complex responsible for the synthesis of proteins in the cell. The small ribosomal subunit (SSU) binds messenger RNAs (mRNAs) and translates the encoded message by selecting cognate aminoacyl-transfer RNA (tRNA) molecules. The large subunit (LSU) contains the ribosomal catalytic site termed the peptidyl transferase center (PTC), which catalyzes the formation of peptide bonds, thereby polymerizing the amino acids delivered by tRNAs into a polypeptide chain. The nascent polypeptides leave the ribosome through a tunnel in the LSU and interact with protein factors that function in enzymatic processing, targeting, and the membrane insertion of nascent chains at the exit of the ribosomal tunnel. uS11 is involved in nucleolar processing of pre-18S ribosomal RNA and ribosome assembly. This is Small ribosomal subunit protein uS11A from Saccharomyces cerevisiae (strain ATCC 204508 / S288c) (Baker's yeast).